The chain runs to 283 residues: Pantothenate synthetase (283 aa).

30-37 (MGNLHDGH) lines the ATP pocket. Histidine 37 functions as the Proton donor in the catalytic mechanism. Glutamine 61 is a binding site for (R)-pantoate. Glutamine 61 is a binding site for beta-alanine. 149–152 (GEKD) serves as a coordination point for ATP. (R)-pantoate is bound at residue glutamine 155. 186–189 (LSSR) lines the ATP pocket.

It belongs to the pantothenate synthetase family. As to quaternary structure, homodimer.

It localises to the cytoplasm. It carries out the reaction (R)-pantoate + beta-alanine + ATP = (R)-pantothenate + AMP + diphosphate + H(+). It participates in cofactor biosynthesis; (R)-pantothenate biosynthesis; (R)-pantothenate from (R)-pantoate and beta-alanine: step 1/1. Catalyzes the condensation of pantoate with beta-alanine in an ATP-dependent reaction via a pantoyl-adenylate intermediate. The polypeptide is Pantothenate synthetase (Shigella dysenteriae serotype 1 (strain Sd197)).